Reading from the N-terminus, the 299-residue chain is Elongation factor Ts (299 aa).

The tract at residues 81 to 84 is involved in Mg(2+) ion dislocation from EF-Tu; the sequence is TDFV.

It belongs to the EF-Ts family.

Its subcellular location is the cytoplasm. Its function is as follows. Associates with the EF-Tu.GDP complex and induces the exchange of GDP to GTP. It remains bound to the aminoacyl-tRNA.EF-Tu.GTP complex up to the GTP hydrolysis stage on the ribosome. In Halothermothrix orenii (strain H 168 / OCM 544 / DSM 9562), this protein is Elongation factor Ts.